The chain runs to 411 residues: Growth-regulating factor 7 (411 aa).

Residues 38-73 (PFTPTQWMELEHQALIYKHIVANAPVPAGLLLPIRR) form the QLQ domain. The WRC domain maps to 108-152 (DSEPGRCRRTDGKKWRCSRDAVVDQKYCERHINRGRHRSRKHVEG). 2 short sequence motifs (bipartite nuclear localization signal) span residues 113-123 (RCRRTDGKKWR) and 141-148 (RGRHRSRK). A disordered region spans residues 333 to 369 (FFTNTSSASDDKGKSRHPPSLNLLADGHTTSPQLQSP). The segment covering 360–369 (HTTSPQLQSP) has biased composition (polar residues).

Belongs to the GRF family.

The protein localises to the nucleus. Functionally, transcription activator that plays a regulatory role in gibberellin-induced stem elongation. The protein is Growth-regulating factor 7 (GRF7) of Oryza sativa subsp. japonica (Rice).